A 119-amino-acid polypeptide reads, in one-letter code: MISKIDKNKVRLKRHARVRTNLSGTAEKPRLNVYRSNKHIYAQIIDDNKGVTLAQASSKDSDIATTATKVELATKVGEAIAKKAADKGIKEIVFDRGGYLYHGRVKALAEAARESGLEF.

The protein belongs to the universal ribosomal protein uL18 family. As to quaternary structure, part of the 50S ribosomal subunit; part of the 5S rRNA/L5/L18/L25 subcomplex. Contacts the 5S and 23S rRNAs.

Functionally, this is one of the proteins that bind and probably mediate the attachment of the 5S RNA into the large ribosomal subunit, where it forms part of the central protuberance. In Staphylococcus aureus (strain Mu3 / ATCC 700698), this protein is Large ribosomal subunit protein uL18.